Here is a 323-residue protein sequence, read N- to C-terminus: MIALGIEGTAWSLSIGVVDEEGVIALENDPYIPKEGGIHPREASQHHSERLPSLLSRVFEKVDKNSIDVVAFSQGPGMGPCLRVVATAARLLAIKLEKPLVGVNHCLAHVEVGRWQTGARKPVSLYVSGGNSQVIARRGNRYRVFGETLDIGIGNALDKLARHMGLKHPGGPKIEELAKKGQKYHFLPYVVKGMDFSFSGMVTAAQRLFDSGVRMEDVAFSFQETAFAMLTEVTERALAYLDLNEVLLVGGVAANKRLQEMLRIMCEDRGAKFYVPPKELAGDNGAMIAYTGLLMYKHGHQTPVEKSYVRPDFRIEDVEVNWD.

His105, His109, and Tyr126 together coordinate Fe cation. Substrate contacts are provided by residues 126 to 130, Asp158, Gly171, Glu175, and Asn255; that span reads YVSGG. Asp283 contributes to the Fe cation binding site.

This sequence belongs to the KAE1 / TsaD family. Monomer. Component of the KEOPS complex that consists of Kae1, Bud32, Cgi121 and Pcc1; the whole complex dimerizes. Fe(2+) serves as cofactor.

It localises to the cytoplasm. It catalyses the reaction L-threonylcarbamoyladenylate + adenosine(37) in tRNA = N(6)-L-threonylcarbamoyladenosine(37) in tRNA + AMP + H(+). Required for the formation of a threonylcarbamoyl group on adenosine at position 37 (t(6)A37) in tRNAs that read codons beginning with adenine. Is a component of the KEOPS complex that is probably involved in the transfer of the threonylcarbamoyl moiety of threonylcarbamoyl-AMP (TC-AMP) to the N6 group of A37. Kae1 likely plays a direct catalytic role in this reaction, but requires other protein(s) of the complex to fulfill this activity. This chain is tRNA N6-adenosine threonylcarbamoyltransferase, found in Archaeoglobus fulgidus (strain ATCC 49558 / DSM 4304 / JCM 9628 / NBRC 100126 / VC-16).